A 200-amino-acid chain; its full sequence is Lipopolysaccharide core heptose(II)-phosphate phosphatase (200 aa).

The signal sequence occupies residues 1 to 25 (MLAFCRSSLKSKKYFIILLALAAIA).

This sequence belongs to the phosphoglycerate mutase family. Ais subfamily.

Its subcellular location is the periplasm. The protein operates within bacterial outer membrane biogenesis; lipopolysaccharide metabolism. Catalyzes the dephosphorylation of heptose(II) of the outer membrane lipopolysaccharide core. This is Lipopolysaccharide core heptose(II)-phosphate phosphatase from Escherichia coli O6:H1 (strain CFT073 / ATCC 700928 / UPEC).